The chain runs to 123 residues: UPF0102 protein Cbei_1183 (123 aa).

This sequence belongs to the UPF0102 family.

The chain is UPF0102 protein Cbei_1183 from Clostridium beijerinckii (strain ATCC 51743 / NCIMB 8052) (Clostridium acetobutylicum).